The chain runs to 551 residues: Serine beta-lactamase-like protein LACTB, mitochondrial (551 aa).

The N-terminal 113 residues, 1–113, are a transit peptide targeting the mitochondrion; that stretch reads MYRLLSSVTA…RAIESSRDLL (113 aa). A disordered region spans residues 69–101; it reads PADPEASGTTELSHEQALSPGSPHTPAPPAARG. S162 functions as the Acyl-ester intermediate in the catalytic mechanism. The interval 237-287 is disordered; that stretch reads LKMVKGTPPPSDQEKELKEKGGKNNEKSDAPKAKVEQDSEARCRSAKPGKK. Over residues 248–279 the composition is skewed to basic and acidic residues; that stretch reads DQEKELKEKGGKNNEKSDAPKAKVEQDSEARC. 2 positions are modified to N6-succinyllysine: K287 and K288. Residues K301 and K346 each carry the N6-acetyllysine modification.

It belongs to the peptidase S12 family. Expressed predominantly in liver.

The protein resides in the mitochondrion. In terms of biological role, mitochondrial serine protease that acts as a regulator of mitochondrial lipid metabolism. Acts by decreasing protein levels of PISD, a mitochondrial enzyme that converts phosphatidylserine (PtdSer) to phosphatidylethanolamine (PtdEtn), thereby affecting mitochondrial lipid metabolism. It is unclear whether it acts directly by mediating proteolysis of PISD or by mediating proteolysis of another lipid metabolism protein. Acts as a tumor suppressor that has the ability to inhibit proliferation of multiple types of cancer cells: probably by promoting decreased levels of PISD, thereby affecting mitochondrial lipid metabolism. The chain is Serine beta-lactamase-like protein LACTB, mitochondrial from Mus musculus (Mouse).